Here is a 198-residue protein sequence, read N- to C-terminus: Probable GTP-binding protein EngB (198 aa).

Residues 22 to 195 form the EngB-type G domain; it reads NRVEVAFVGR…IDNLFLEFAT (174 aa). Residues 30 to 37, 57 to 61, 75 to 78, 142 to 145, and 174 to 176 contribute to the GTP site; these read GRSNVGKS, GKTRL, DLPG, TKSD, and FSS. Mg(2+) is bound by residues Ser-37 and Thr-59.

The protein belongs to the TRAFAC class TrmE-Era-EngA-EngB-Septin-like GTPase superfamily. EngB GTPase family. Requires Mg(2+) as cofactor.

In terms of biological role, necessary for normal cell division and for the maintenance of normal septation. The sequence is that of Probable GTP-binding protein EngB from Clostridium beijerinckii (strain ATCC 51743 / NCIMB 8052) (Clostridium acetobutylicum).